We begin with the raw amino-acid sequence, 237 residues long: UPF0173 metal-dependent hydrolase HQ_3368A (237 aa).

It belongs to the UPF0173 family.

The polypeptide is UPF0173 metal-dependent hydrolase HQ_3368A (Haloquadratum walsbyi (strain DSM 16790 / HBSQ001)).